A 292-amino-acid polypeptide reads, in one-letter code: Small ribosomal subunit biogenesis GTPase RsgA (292 aa).

The region spanning 64–221 (RSELFRPAVA…LVDTPGFSSL (158 aa)) is the CP-type G domain. GTP-binding positions include 113–116 (NKMD) and 164–172 (GPSGVGKST). Residues Cys-245, Cys-250, His-252, and Cys-258 each coordinate Zn(2+).

The protein belongs to the TRAFAC class YlqF/YawG GTPase family. RsgA subfamily. In terms of assembly, monomer. Associates with 30S ribosomal subunit, binds 16S rRNA. It depends on Zn(2+) as a cofactor.

The protein localises to the cytoplasm. One of several proteins that assist in the late maturation steps of the functional core of the 30S ribosomal subunit. Helps release RbfA from mature subunits. May play a role in the assembly of ribosomal proteins into the subunit. Circularly permuted GTPase that catalyzes slow GTP hydrolysis, GTPase activity is stimulated by the 30S ribosomal subunit. This chain is Small ribosomal subunit biogenesis GTPase RsgA, found in Clostridium botulinum (strain Loch Maree / Type A3).